The chain runs to 417 residues: D-galactonate dehydratase family member RspA (417 aa).

Residues glutamine 43 and histidine 127 each contribute to the substrate site. Tyrosine 158 serves as the catalytic Proton donor/acceptor. Aspartate 223 contributes to the Mg(2+) binding site. The active-site Proton donor/acceptor is the histidine 225. Positions 249 and 275 each coordinate Mg(2+). Glutamate 275, arginine 296, histidine 325, aspartate 329, and glutamate 352 together coordinate substrate.

Belongs to the mandelate racemase/muconate lactonizing enzyme family. GalD subfamily. It depends on Mg(2+) as a cofactor.

The catalysed reaction is D-gluconate = 2-dehydro-3-deoxy-D-gluconate + H2O. Functionally, has low D-gluconate dehydratase activity (in vitro), suggesting that it has no significant role in D-gluconate degradation in vivo. Has no detectable activity with a panel of 70 other acid sugars (in vitro). This Pantoea ananatis (strain LMG 20103) protein is D-galactonate dehydratase family member RspA (rspA).